We begin with the raw amino-acid sequence, 266 residues long: Indole-3-glycerol phosphate synthase (266 aa).

The protein belongs to the TrpC family.

The enzyme catalyses 1-(2-carboxyphenylamino)-1-deoxy-D-ribulose 5-phosphate + H(+) = (1S,2R)-1-C-(indol-3-yl)glycerol 3-phosphate + CO2 + H2O. The protein operates within amino-acid biosynthesis; L-tryptophan biosynthesis; L-tryptophan from chorismate: step 4/5. This chain is Indole-3-glycerol phosphate synthase, found in Paracidovorax citrulli (strain AAC00-1) (Acidovorax citrulli).